We begin with the raw amino-acid sequence, 271 residues long: Cobalt import ATP-binding protein CbiO (271 aa).

The 235-residue stretch at 2–236 folds into the ABC transporter domain; it reads LATSDLWFRY…TEAMEHAGLT (235 aa). 34-41 is an ATP binding site; sequence GANGCGKS.

Belongs to the ABC transporter superfamily. Cobalt importer (TC 3.A.1.18.1) family. As to quaternary structure, forms an energy-coupling factor (ECF) transporter complex composed of an ATP-binding protein (A component, CbiO), a transmembrane protein (T component, CbiQ) and 2 possible substrate-capture proteins (S components, CbiM and CbiN) of unknown stoichimetry.

The protein localises to the cell inner membrane. It functions in the pathway cofactor biosynthesis; adenosylcobalamin biosynthesis. In terms of biological role, part of the energy-coupling factor (ECF) transporter complex CbiMNOQ involved in cobalt import. Presumably responsible for energy coupling to the transport system. The protein is Cobalt import ATP-binding protein CbiO of Salmonella paratyphi A (strain ATCC 9150 / SARB42).